The sequence spans 973 residues: Short transient receptor potential channel 5 (973 aa).

The Cytoplasmic portion of the chain corresponds to 1 to 325 (MAQLYYKKVN…YDGFPGWRRK (325 aa)). ANK repeat units follow at residues 30 to 60 (SAEEKAFLNAVEKGDYATVKQALQEAEIYYN), 69 to 97 (LGRSALLIAIENENLEIMELLLNHSVYVG), 98 to 124 (DALLYAIRKEVVGAVELLLSYRRPSGE), and 141 to 170 (PDITPIMLAAHTNNYEIIKLLVQKRVTIPR). Residues His172, Cys176, Cys178, and Cys181 each contribute to the Zn(2+) site. The segment at residues 326–360 (HWVVKLLTCMTIGFLFPMLSIAYLISPRSNLGLFI) is an intramembrane region (discontinuously helical). Over 361-363 (KKP) the chain is Cytoplasmic. Residues 364 to 384 (FIKFICHTASYLTFLFMLLLA) form a helical membrane-spanning segment. At 385–404 (SQHIVRTDLHVQGPPPTVVE) the chain is on the extracellular side. The chain crosses the membrane as a helical span at residues 405–419 (WMILPWVLGFIWGEI). 4 residues coordinate Ca(2+): Glu418, Glu421, Asn436, and Asp439. The Cytoplasmic portion of the chain corresponds to 420–433 (KEMWDGGFTEYIHD). The helical transmembrane segment at 434-454 (WWNLMDFAMNSLYLATISLKI) threads the bilayer. Topologically, residues 455–476 (VAYVKYNGSRPREEWEMWHPTL) are extracellular. Asn461 carries an N-linked (GlcNAc...) asparagine glycan. A helical transmembrane segment spans residues 477–497 (IAEALFAISNILSSLRLISLF). Residues 498 to 512 (TANSHLGPLQISLGR) lie on the Cytoplasmic side of the membrane. Residues 513 to 535 (MLLDILKFLFIYCLVLLAFANGL) form a helical membrane-spanning segment. Residues 536 to 603 (NQLYFYYETR…HEFTEFVGAT (68 aa)) lie on the Extracellular side of the membrane. Cys553 and Cys558 are joined by a disulfide. Residues 604 to 624 (MFGTYNVISLVVLLNMLIAMM) traverse the membrane as a helical segment. Residues 625–973 (NNSYQLIADH…GQEEQVTTRL (349 aa)) lie on the Cytoplasmic side of the membrane. Disordered regions lie at residues 766–794 (HPRSFSTSSTELSQRDDNNDGSGGARAKS) and 810–837 (GPPLIRTMPRSSGAQGKSKAESSSKRSF). The segment at 971-973 (TRL) is essential for binding to NHERF1 PDZ domain.

Belongs to the transient receptor (TC 1.A.4) family. STrpC subfamily. TRPC5 sub-subfamily. As to quaternary structure, homotetramer. Heterotetramer with TRPC1 and/or TRPC4. Each subunit in the homomeric ion channel (via ANK repeats) interacts with one copy of GTP-bound GNAI3; the interaction is direct and activates the ion channel. Interacts with TRPC4AP. Interacts with NHERF1. Interacts with MX1 and RNF24. Interacts (via C-terminus) with CABP1. Interacts with SESTD1 (via the spectrin 1 repeat). Interacts with PLSCR1. Interacts with PKD2L2. As to expression, expressed in brain with higher levels in fetal brain. Found in cerebellum and occipital pole.

The protein localises to the cell membrane. It catalyses the reaction Ca(2+)(in) = Ca(2+)(out). Activated by G-protein coupled receptors via direct interaction with GTP-bound GNAI3, which increases the channel sensitivity to phosphatidylinositol bisphosphate. May be activated by intracellular calcium store depletion. Calcium channel activity is enhanced by MYLK, that promotes its subcellular localization at the plasma membrane. Its function is as follows. Forms a receptor-activated non-selective calcium permeant cation channel. Mediates calcium-dependent phosphatidylserine externalization and apoptosis in neurons via its association with PLSCR1. Acts on distinct neuronal populations in the hypothalamus to regulate innate behaviors including feeding, anxiety (flight/fight/fear), socialization, and maternal care. In Homo sapiens (Human), this protein is Short transient receptor potential channel 5 (TRPC5).